Reading from the N-terminus, the 385-residue chain is 4-hydroxy-3-methylbut-2-en-1-yl diphosphate synthase (flavodoxin) 2 (385 aa).

4 residues coordinate [4Fe-4S] cluster: Cys280, Cys283, Cys315, and Glu322.

This sequence belongs to the IspG family. The cofactor is [4Fe-4S] cluster.

The catalysed reaction is (2E)-4-hydroxy-3-methylbut-2-enyl diphosphate + oxidized [flavodoxin] + H2O + 2 H(+) = 2-C-methyl-D-erythritol 2,4-cyclic diphosphate + reduced [flavodoxin]. Its pathway is isoprenoid biosynthesis; isopentenyl diphosphate biosynthesis via DXP pathway; isopentenyl diphosphate from 1-deoxy-D-xylulose 5-phosphate: step 5/6. Functionally, converts 2C-methyl-D-erythritol 2,4-cyclodiphosphate (ME-2,4cPP) into 1-hydroxy-2-methyl-2-(E)-butenyl 4-diphosphate. This is 4-hydroxy-3-methylbut-2-en-1-yl diphosphate synthase (flavodoxin) 2 from Streptomyces coelicolor (strain ATCC BAA-471 / A3(2) / M145).